Consider the following 78-residue polypeptide: Acyl carrier protein (78 aa).

Residues 2–77 (SDIEQRVKQA…SAIDYVTKKL (76 aa)) form the Carrier domain. Residue Ser-37 is modified to O-(pantetheine 4'-phosphoryl)serine.

Belongs to the acyl carrier protein (ACP) family. 4'-phosphopantetheine is transferred from CoA to a specific serine of apo-ACP by AcpS. This modification is essential for activity because fatty acids are bound in thioester linkage to the sulfhydryl of the prosthetic group.

It is found in the cytoplasm. Its pathway is lipid metabolism; fatty acid biosynthesis. Carrier of the growing fatty acid chain in fatty acid biosynthesis. The polypeptide is Acyl carrier protein (Acinetobacter baumannii (strain AB307-0294)).